The sequence spans 529 residues: DEP domain-containing protein 1B (529 aa).

The region spanning 24–108 (FRARMPLRRH…DNRHLYRFPP (85 aa)) is the DEP domain. The residue at position 160 (Ser-160) is a Phosphoserine. A Rho-GAP domain is found at 201 to 393 (DSLEEVLNTK…FLMDNYQEIL (193 aa)). At Ser-436 the chain carries Phosphoserine.

In Mus musculus (Mouse), this protein is DEP domain-containing protein 1B (Depdc1b).